Reading from the N-terminus, the 259-residue chain is 3-deoxy-manno-octulosonate cytidylyltransferase (259 aa).

This sequence belongs to the KdsB family.

It is found in the cytoplasm. It carries out the reaction 3-deoxy-alpha-D-manno-oct-2-ulosonate + CTP = CMP-3-deoxy-beta-D-manno-octulosonate + diphosphate. It functions in the pathway nucleotide-sugar biosynthesis; CMP-3-deoxy-D-manno-octulosonate biosynthesis; CMP-3-deoxy-D-manno-octulosonate from 3-deoxy-D-manno-octulosonate and CTP: step 1/1. Its pathway is bacterial outer membrane biogenesis; lipopolysaccharide biosynthesis. Its function is as follows. Activates KDO (a required 8-carbon sugar) for incorporation into bacterial lipopolysaccharide in Gram-negative bacteria. The sequence is that of 3-deoxy-manno-octulosonate cytidylyltransferase from Nitrosococcus oceani (strain ATCC 19707 / BCRC 17464 / JCM 30415 / NCIMB 11848 / C-107).